The primary structure comprises 305 residues: Probable aspartoacylase (305 aa).

Zn(2+)-binding residues include histidine 13 and glutamate 16. Residues arginine 55 and 62–63 (NR) each bind substrate. A Zn(2+)-binding site is contributed by histidine 105. Substrate-binding residues include glutamate 163 and tyrosine 273.

This sequence belongs to the AspA/AstE family. Aspartoacylase subfamily. Zn(2+) is required as a cofactor.

The enzyme catalyses an N-acyl-L-aspartate + H2O = a carboxylate + L-aspartate. The chain is Probable aspartoacylase from Prochlorococcus marinus (strain NATL2A).